The chain runs to 771 residues: Hyperosmolality-gated Ca2+ permeable channel 1.3 (771 aa).

Residues 7–27 (IGVAAAINILTAIIFLLAFAI) form a helical membrane-spanning segment. Residue serine 54 is modified to Phosphoserine. Helical transmembrane passes span 101-121 (IYLI…SILV), 158-178 (FWTH…VLMK), 375-395 (LIMH…IAFV), 427-447 (FLPG…LMVM), 467-487 (YYIF…SAFE), 512-532 (ATFF…GEIL), 584-604 (PVTP…YLVF), 630-650 (IISA…TKGA), and 651-671 (AQST…HRYC). The interval 744–771 (VPTKRQSRINTPAVSHASRGSSRSPPSK) is disordered. Positions 751-771 (RINTPAVSHASRGSSRSPPSK) are enriched in polar residues.

It belongs to the CSC1 (TC 1.A.17) family. Phosphorylated at Ser-54 by BIK1 in response to pathogen-associated molecular pattern (PAMP) perception, promoting its activation. Preferentially expressed in guard cells.

The protein localises to the cell membrane. It carries out the reaction Ca(2+)(in) = Ca(2+)(out). Its activity is regulated as follows. Activated following phosphorylation at Ser-54 by BIK1. Functionally, calcium-permeable channel that plays a key role in plant stomatal immunity. In response to pathogen-associated molecular pattern (PAMP) perception, phosphorylated and activated by BIK1, triggering rapid influx of calcium ions across the plasma membrane, leading to stomatal closure. The sequence is that of Hyperosmolality-gated Ca2+ permeable channel 1.3 from Arabidopsis thaliana (Mouse-ear cress).